A 728-amino-acid polypeptide reads, in one-letter code: Catalase-peroxidase (728 aa).

A cross-link (tryptophyl-tyrosyl-methioninium (Trp-Tyr) (with M-244)) is located at residues 91-218 (WHSAGTYRTA…LAAVQMGLIY (128 aa)). Catalysis depends on His-92, which acts as the Proton acceptor. Residues 218 to 244 (YVNPEGPDGNPDPVAAARDIRDTFARM) constitute a cross-link (tryptophyl-tyrosyl-methioninium (Tyr-Met) (with W-91)). His-259 contributes to the heme b binding site.

This sequence belongs to the peroxidase family. Peroxidase/catalase subfamily. Homodimer or homotetramer. Requires heme b as cofactor. In terms of processing, formation of the three residue Trp-Tyr-Met cross-link is important for the catalase, but not the peroxidase activity of the enzyme.

The enzyme catalyses H2O2 + AH2 = A + 2 H2O. The catalysed reaction is 2 H2O2 = O2 + 2 H2O. Bifunctional enzyme with both catalase and broad-spectrum peroxidase activity. The sequence is that of Catalase-peroxidase from Burkholderia mallei (strain NCTC 10247).